The following is a 521-amino-acid chain: Cytochrome P450 monooxygenase 105 (521 aa).

A helical membrane pass occupies residues 12 to 32 (GVASPATLAVAAVTFLTALVL). N-linked (GlcNAc...) asparagine glycans are attached at residues Asn-218, Asn-274, and Asn-317. Heme is bound at residue Cys-449.

The protein belongs to the cytochrome P450 family. Heme serves as cofactor.

It localises to the membrane. It functions in the pathway secondary metabolite biosynthesis. Functionally, cytochrome P450 monooxygenase that is able to use anthracene, carbazole, pyrene, phenanthrene and trans-stilbene as substrates for oxidation. These multifunctional properties against a series of polycyclic aromatic hydrocarbons (PAHs) suggest that CYP105 would play important roles, at least in part, in fungal metabolic systems involved in xenobiotic detoxification. The sequence is that of Cytochrome P450 monooxygenase 105 from Postia placenta (strain ATCC 44394 / Madison 698-R) (Brown rot fungus).